The primary structure comprises 319 residues: Annexin A4 (319 aa).

N-acetylalanine is present on Ala-2. Position 7 is a phosphothreonine (Thr-7). At Ser-12 the chain carries Phosphoserine. Annexin repeat units lie at residues 14-85, 86-157, 169-241, and 245-316; these read FNAM…GMMT, PTVL…SLSA, ALVR…AIVK, and NKSA…VLCG. Residues Lys-213, Lys-293, and Lys-300 each carry the N6-acetyllysine modification.

It belongs to the annexin family.

It localises to the zymogen granule membrane. Its function is as follows. Calcium/phospholipid-binding protein which promotes membrane fusion and is involved in exocytosis. The protein is Annexin A4 of Homo sapiens (Human).